A 247-amino-acid chain; its full sequence is Carboxy-S-adenosyl-L-methionine synthase (247 aa).

S-adenosyl-L-methionine is bound by residues Tyr40, 65 to 67, 90 to 91, 122 to 123, Asn137, and Arg204; these read GAS, DN, and DI.

This sequence belongs to the class I-like SAM-binding methyltransferase superfamily. Cx-SAM synthase family. As to quaternary structure, homodimer.

The catalysed reaction is prephenate + S-adenosyl-L-methionine = carboxy-S-adenosyl-L-methionine + 3-phenylpyruvate + H2O. Functionally, catalyzes the conversion of S-adenosyl-L-methionine (SAM) to carboxy-S-adenosyl-L-methionine (Cx-SAM). The protein is Carboxy-S-adenosyl-L-methionine synthase of Pseudomonas putida (strain GB-1).